The primary structure comprises 95 residues: SCYDLCRPCGPTPLANSCNEPCVRQCQDSRVVIQPSPVVVTLPGPILSSFPQNTAVGSTSAAVGSILSEEGVPISSGGFGLSGFGGRYSGRCLPC.

Ser1 carries the post-translational modification N-acetylserine.

It belongs to the avian keratin family. The avian keratins (F-ker, S-ker, C-ker and B-ker) are a complex mixture of very similar polypeptides.

The sequence is that of Feather keratin B-4 from Anas platyrhynchos (Mallard).